The sequence spans 61 residues: Small ribosomal subunit protein uS14B (61 aa).

The Zn(2+) site is built by Cys-24, Cys-27, Cys-40, and Cys-43.

Belongs to the universal ribosomal protein uS14 family. Zinc-binding uS14 subfamily. In terms of assembly, part of the 30S ribosomal subunit. Contacts proteins S3 and S10. Zn(2+) serves as cofactor.

Binds 16S rRNA, required for the assembly of 30S particles and may also be responsible for determining the conformation of the 16S rRNA at the A site. This Levilactobacillus brevis (strain ATCC 367 / BCRC 12310 / CIP 105137 / JCM 1170 / LMG 11437 / NCIMB 947 / NCTC 947) (Lactobacillus brevis) protein is Small ribosomal subunit protein uS14B.